We begin with the raw amino-acid sequence, 430 residues long: MSNRKAKLSFENQSVEFPIYSPTLGKDVIDVKTLGNHGAYALDVGFYSTAACESKITFIDGEKGILLYRGYPIDQLADKSDYMEVCYLLMYGELPNKGEKEKFVRTIKEHTSVYEQVTKFFNGFHYDAHPMAMVLSTIGALSAFYHDALDITKPADRELSAIRLIAKMPTLAAMSYKYSIGQPFMHPRRAMNYAENFLHMLFGTPYEETEPDPVLARAMDRIFILHADHEQNASTTTVRVAGSTGANPFACISAGISALWGPAHGGANEACLNMLRKIGDEKNIGQYIKKAKDKNDPFRLMGFGHRVYKNYDPRAKVMQKTCYEVLDAVGRHNEPLFKLAIKLEKIALEDDYFIEKKLYPNVDFYSGLTLNAIGIPSNMFTVIFALSRTVGWISHWMEMMSSPDHRLARPRQLYTGETEREVISLDKRQA.

Residues His-305 and Asp-363 contribute to the active site.

This sequence belongs to the citrate synthase family. Homohexamer.

The enzyme catalyses oxaloacetate + acetyl-CoA + H2O = citrate + CoA + H(+). Its pathway is carbohydrate metabolism; tricarboxylic acid cycle; isocitrate from oxaloacetate: step 1/2. With respect to regulation, allosterically inhibited by NADH. The polypeptide is Citrate synthase (gltA) (Coxiella burnetii (strain RSA 493 / Nine Mile phase I)).